We begin with the raw amino-acid sequence, 331 residues long: Homoserine kinase (331 aa).

The protein belongs to the pseudomonas-type ThrB family.

It catalyses the reaction L-homoserine + ATP = O-phospho-L-homoserine + ADP + H(+). It participates in amino-acid biosynthesis; L-threonine biosynthesis; L-threonine from L-aspartate: step 4/5. The polypeptide is Homoserine kinase (Burkholderia pseudomallei (strain 1710b)).